The sequence spans 196 residues: uncharacterized protein (196 aa).

This sequence belongs to the CDP-alcohol phosphatidyltransferase class-I family.

This is an uncharacterized protein from Aquifex aeolicus (strain VF5).